A 290-amino-acid polypeptide reads, in one-letter code: Bifunctional protein FolD 1 (290 aa).

Residues 164–166 (GRS), isoleucine 193, and isoleucine 236 contribute to the NADP(+) site.

It belongs to the tetrahydrofolate dehydrogenase/cyclohydrolase family. Homodimer.

The catalysed reaction is (6R)-5,10-methylene-5,6,7,8-tetrahydrofolate + NADP(+) = (6R)-5,10-methenyltetrahydrofolate + NADPH. It catalyses the reaction (6R)-5,10-methenyltetrahydrofolate + H2O = (6R)-10-formyltetrahydrofolate + H(+). Its pathway is one-carbon metabolism; tetrahydrofolate interconversion. Its function is as follows. Catalyzes the oxidation of 5,10-methylenetetrahydrofolate to 5,10-methenyltetrahydrofolate and then the hydrolysis of 5,10-methenyltetrahydrofolate to 10-formyltetrahydrofolate. The protein is Bifunctional protein FolD 1 of Geobacter metallireducens (strain ATCC 53774 / DSM 7210 / GS-15).